The following is a 270-amino-acid chain: NAD kinase (270 aa).

Aspartate 63 functions as the Proton acceptor in the catalytic mechanism. NAD(+)-binding positions include 63–64, arginine 68, 131–132, lysine 142, arginine 159, aspartate 161, 172–177, alanine 196, and glutamine 230; these read DG, NE, and TAYAMS.

The protein belongs to the NAD kinase family. A divalent metal cation serves as cofactor.

The protein localises to the cytoplasm. It catalyses the reaction NAD(+) + ATP = ADP + NADP(+) + H(+). In terms of biological role, involved in the regulation of the intracellular balance of NAD and NADP, and is a key enzyme in the biosynthesis of NADP. Catalyzes specifically the phosphorylation on 2'-hydroxyl of the adenosine moiety of NAD to yield NADP. In Methanoregula boonei (strain DSM 21154 / JCM 14090 / 6A8), this protein is NAD kinase.